Reading from the N-terminus, the 521-residue chain is RING-type E3 ubiquitin-protein ligase PPIL2 (521 aa).

The region spanning 35–108 (RRLPFDHCSL…GQYHCPVLYS (74 aa)) is the U-box domain. Positions 197-217 (LKNTNSETRETLQELYKEFKG) form a coiled coil. A Glycyl lysine isopeptide (Lys-Gly) (interchain with G-Cter in SUMO2) cross-link involves residue Lys-216. A PPIase cyclophilin-type domain is found at 278–433 (KKGYVRLHTN…EEVLICTTTV (156 aa)). Positions 447 to 462 (QERKKTQHQVDPEAKV) are enriched in basic and acidic residues. The interval 447-521 (QERKKTQHQV…SRGFGDFSSW (75 aa)) is disordered. The segment covering 465–478 (SQPQPGNQGPQTYR) has biased composition (polar residues). Residue Lys-483 is modified to N6-acetyllysine.

It belongs to the cyclophilin-type PPIase family. PPIL2 subfamily. In terms of assembly, component of the minor spliceosome, which splices U12-type introns. Within this complex, interacts with PRPF8/PRP8, EFTUD2/SNU114 and PLRG1. Interacts with isoform 2 of BSG. Interacts (via the PPIase cyclophilin-type domain) with CRNKL1; they may form a trimeric complex with HSP90.

It localises to the nucleus. The enzyme catalyses S-ubiquitinyl-[E2 ubiquitin-conjugating enzyme]-L-cysteine + [acceptor protein]-L-lysine = [E2 ubiquitin-conjugating enzyme]-L-cysteine + N(6)-ubiquitinyl-[acceptor protein]-L-lysine.. It participates in protein modification; protein ubiquitination. Functionally, has a ubiquitin-protein ligase activity acting as an E3 ubiquitin protein ligase or as an ubiquitin-ubiquitin ligase promoting elongation of ubiquitin chains on substrates. By mediating 'Lys-48'-linked polyubiquitination of proteins could target them for proteasomal degradation. May also function as a chaperone, playing a role in transport to the cell membrane of BSG/Basigin for instance. Probable inactive PPIase with no peptidyl-prolyl cis-trans isomerase activity. As a component of the minor spliceosome, involved in the splicing of U12-type introns in pre-mRNAs. The protein is RING-type E3 ubiquitin-protein ligase PPIL2 of Mus musculus (Mouse).